The following is an 833-amino-acid chain: Translation initiation factor IF-2 (833 aa).

Residues 1-247 are disordered; sequence MTEDVKKADG…ALQQAFTKPA (247 aa). Basic and acidic residues-rich tracts occupy residues 53 to 99 and 110 to 152; these read QKAE…EAKK and VDVE…RYAE. Acidic residues predominate over residues 153-166; sequence LSEEDAENENSEDY. A compositionally biased stretch (basic residues) spans 187-203; it reads KENRNRGGKNKVAKAKK. Basic and acidic residues predominate over residues 204-227; it reads GGREDESSKTERESNRRNQKDGKM. Residues 333–502 enclose the tr-type G domain; sequence TRAPVVTIMG…LLQSEVLELT (170 aa). The interval 342–349 is G1; the sequence is GHVDHGKT. 342 to 349 lines the GTP pocket; it reads GHVDHGKT. The G2 stretch occupies residues 367-371; sequence GITQH. Residues 388–391 are G3; the sequence is DTPG. Residues 388 to 392 and 442 to 445 each bind GTP; these read DTPGH and NKID. The tract at residues 442 to 445 is G4; that stretch reads NKID. The segment at 478 to 480 is G5; it reads SAK.

It belongs to the TRAFAC class translation factor GTPase superfamily. Classic translation factor GTPase family. IF-2 subfamily.

Its subcellular location is the cytoplasm. One of the essential components for the initiation of protein synthesis. Protects formylmethionyl-tRNA from spontaneous hydrolysis and promotes its binding to the 30S ribosomal subunits. Also involved in the hydrolysis of GTP during the formation of the 70S ribosomal complex. The sequence is that of Translation initiation factor IF-2 (infB) from Pasteurella multocida (strain Pm70).